A 438-amino-acid polypeptide reads, in one-letter code: uncharacterized protein (438 aa).

Disordered regions lie at residues 1–22 (MRDNTAKGITAGSGSQQTTYDP) and 156–264 (DTAK…PWRP). Residues 156 to 170 (DTAKSNEKLQGDESK) show a composition bias toward basic and acidic residues. Low complexity predominate over residues 171–189 (SSNGSSSTSTTTQRGSTNS). Residues 191–206 (TKVKALKIEVKKKSDS) show a composition bias toward basic and acidic residues.

This sequence belongs to the adhesin P1 family.

This is an uncharacterized protein from Mycoplasma pneumoniae (strain ATCC 29342 / M129 / Subtype 1) (Mycoplasmoides pneumoniae).